A 257-amino-acid polypeptide reads, in one-letter code: Phosphonates import ATP-binding protein PhnC (257 aa).

In terms of domain architecture, ABC transporter spans 2 to 246; sequence IEFRNVSKVY…KFAEIYGDVA (245 aa). 35 to 42 is a binding site for ATP; that stretch reads GLSGAGKS.

Belongs to the ABC transporter superfamily. Phosphonates importer (TC 3.A.1.9.1) family. As to quaternary structure, the complex is composed of two ATP-binding proteins (PhnC), two transmembrane proteins (PhnE) and a solute-binding protein (PhnD).

It localises to the cell membrane. It catalyses the reaction phosphonate(out) + ATP + H2O = phosphonate(in) + ADP + phosphate + H(+). Its function is as follows. Part of the ABC transporter complex PhnCDE involved in phosphonates import. Responsible for energy coupling to the transport system. In Bacillus cereus (strain ATCC 14579 / DSM 31 / CCUG 7414 / JCM 2152 / NBRC 15305 / NCIMB 9373 / NCTC 2599 / NRRL B-3711), this protein is Phosphonates import ATP-binding protein PhnC.